The sequence spans 558 residues: CTP synthase (558 aa).

The segment at 1-267 (MTKFVFVTGG…AQQTLELLNL (267 aa)) is amidoligase domain. Serine 13 is a CTP binding site. Serine 13 contributes to the UTP binding site. ATP-binding positions include 14-19 (SIGKGI) and aspartate 71. Mg(2+) is bound by residues aspartate 71 and glutamate 141. CTP-binding positions include 148 to 150 (DIE), 188 to 193 (KTKPTQ), and lysine 224. UTP contacts are provided by residues 188–193 (KTKPTQ) and lysine 224. Residues 292-534 (EVALVGKYVQ…VKASVDYNHV (243 aa)) enclose the Glutamine amidotransferase type-1 domain. Glycine 354 is a binding site for L-glutamine. The active-site Nucleophile; for glutamine hydrolysis is the cysteine 381. Residues 382–385 (MGMQ), glutamate 405, and arginine 462 contribute to the L-glutamine site. Catalysis depends on residues histidine 507 and glutamate 509.

Belongs to the CTP synthase family. As to quaternary structure, homotetramer.

The enzyme catalyses UTP + L-glutamine + ATP + H2O = CTP + L-glutamate + ADP + phosphate + 2 H(+). It catalyses the reaction L-glutamine + H2O = L-glutamate + NH4(+). It carries out the reaction UTP + NH4(+) + ATP = CTP + ADP + phosphate + 2 H(+). The protein operates within pyrimidine metabolism; CTP biosynthesis via de novo pathway; CTP from UDP: step 2/2. Allosterically activated by GTP, when glutamine is the substrate; GTP has no effect on the reaction when ammonia is the substrate. The allosteric effector GTP functions by stabilizing the protein conformation that binds the tetrahedral intermediate(s) formed during glutamine hydrolysis. Inhibited by the product CTP, via allosteric rather than competitive inhibition. Catalyzes the ATP-dependent amination of UTP to CTP with either L-glutamine or ammonia as the source of nitrogen. Regulates intracellular CTP levels through interactions with the four ribonucleotide triphosphates. This is CTP synthase from Gloeothece citriformis (strain PCC 7424) (Cyanothece sp. (strain PCC 7424)).